The following is a 261-amino-acid chain: 5'-nucleotidase SurE (261 aa).

The a divalent metal cation site is built by Asp-8, Asp-9, Ser-40, and Asn-94.

Belongs to the SurE nucleotidase family. A divalent metal cation serves as cofactor.

It localises to the cytoplasm. It catalyses the reaction a ribonucleoside 5'-phosphate + H2O = a ribonucleoside + phosphate. Functionally, nucleotidase that shows phosphatase activity on nucleoside 5'-monophosphates. The protein is 5'-nucleotidase SurE of Anaplasma marginale (strain Florida).